A 766-amino-acid chain; its full sequence is MATYLEFIQQNEERDGVRFSWNVWPSSRLEATRMVVPLACLLTPLKERPDLPPVQYEPVLCSRPTCKAVLNPLCQVDYRAKLWACNFCFQRNQFPPAYGGISEVNQPAELMPQFSTIEYVIQRGAQSPLIFLYVVDTCLEEDDLQALKESLQMSLSLLPPDALVGLITFGRMVQVHELSCEGISKSYVFRGTKDLTAKQIQDMLGLTKPAMPMQQARPAQPQEHPFASSRFLQPVHKIDMNLTDLLGELQRDPWPVTQGKRPLRSTGVALSIAVGLLEGTFPNTGARIMLFTGGPPTQGPGMVVGDELKIPIRSWHDIEKDNARFMKKATKHYEMLANRTAANGHCIDIYACALDQTGLLEMKCCANLTGGYMVMGDSFNTSLFKQTFQRIFTKDFNGDFRMAFGATLDVKTSRELKIAGAIGPCVSLNVKGPCVSENELGVGGTSQWKICGLDPTSTLGIYFEVVNQHNTPIPQGGRGAIQFVTHYQHSSTQRRIRVTTIARNWADVQSQLRHIEAAFDQEAAAVLMARLGVFRAESEEGPDVLRWLDRQLIRLCQKFGQYNKEDPTSFRLSDSFSLYPQFMFHLRRSPFLQVFNNSPDSSYYRHHFARQDLTQSLIMIQPILYSYSFHGPPEPVLLDSSSILADRILLMDTFFQIVIYLGETIAQWRKAGYQDMPEYENFKHLLQAPLDDAQEILQARFPMPRYINTEHGGSQARFLLSKVNPSQTHNNLYAWGQETGAPILTDDVSLQVFMDHLKKLAVSSAC.

The residue at position 2 (Ala-2) is an N-acetylalanine. Zn(2+)-binding residues include Cys-61, Cys-66, Cys-85, and Cys-88. At Lys-564 the chain carries N6-acetyllysine. Residues 633-719 (PEPVLLDSSS…EHGGSQARFL (87 aa)) form a Gelsolin-like repeat.

Belongs to the SEC23/SEC24 family. SEC23 subfamily. In terms of assembly, COPII is composed of at least five proteins: the Sec23/24 complex, the Sec13/31 complex and Sar1. Interacts with SAR1A.

The protein localises to the cytoplasmic vesicle. The protein resides in the COPII-coated vesicle membrane. It localises to the endoplasmic reticulum membrane. It is found in the cytoplasm. Its subcellular location is the cytosol. Functionally, component of the coat protein complex II (COPII) which promotes the formation of transport vesicles from the endoplasmic reticulum (ER). The coat has two main functions, the physical deformation of the endoplasmic reticulum membrane into vesicles and the selection of cargo molecules for their transport to the Golgi complex. In Pongo abelii (Sumatran orangutan), this protein is Protein transport protein Sec23B.